The following is a 389-amino-acid chain: 2-deoxystreptamine N-acetyl-D-glucosaminyltransferase (389 aa).

It belongs to the glycosyltransferase group 1 family.

The enzyme catalyses 2-deoxystreptamine + UDP-N-acetyl-alpha-D-glucosamine = 2'-N-acetylparomamine + UDP + H(+). Its pathway is antibiotic biosynthesis; butirosin biosynthesis. Glycosyltransferase involved in the biosynthesis of butirosin by mediating conversion of 2-deoxystreptamine (2-DOS) to 2'-N-acetylparomamine using UDP-alpha-D-glucosamine as sugar donor. In Niallia circulans (Bacillus circulans), this protein is 2-deoxystreptamine N-acetyl-D-glucosaminyltransferase (btrM).